A 20-amino-acid chain; its full sequence is Cytochrome c oxidase subunit 6A1, mitochondrial (20 aa).

Belongs to the cytochrome c oxidase subunit 6A family. As to quaternary structure, component of the cytochrome c oxidase (complex IV, CIV), a multisubunit enzyme composed of 14 subunits. The complex is composed of a catalytic core of 3 subunits MT-CO1, MT-CO2 and MT-CO3, encoded in the mitochondrial DNA, and 11 supernumerary subunits COX4I, COX5A, COX5B, COX6A, COX6B, COX6C, COX7A, COX7B, COX7C, COX8 and NDUFA4, which are encoded in the nuclear genome. The complex exists as a monomer or a dimer and forms supercomplexes (SCs) in the inner mitochondrial membrane with NADH-ubiquinone oxidoreductase (complex I, CI) and ubiquinol-cytochrome c oxidoreductase (cytochrome b-c1 complex, complex III, CIII), resulting in different assemblies (supercomplex SCI(1)III(2)IV(1) and megacomplex MCI(2)III(2)IV(2)). In terms of tissue distribution, liver specific isoform.

Its subcellular location is the mitochondrion inner membrane. It functions in the pathway energy metabolism; oxidative phosphorylation. In terms of biological role, component of the cytochrome c oxidase, the last enzyme in the mitochondrial electron transport chain which drives oxidative phosphorylation. The respiratory chain contains 3 multisubunit complexes succinate dehydrogenase (complex II, CII), ubiquinol-cytochrome c oxidoreductase (cytochrome b-c1 complex, complex III, CIII) and cytochrome c oxidase (complex IV, CIV), that cooperate to transfer electrons derived from NADH and succinate to molecular oxygen, creating an electrochemical gradient over the inner membrane that drives transmembrane transport and the ATP synthase. Cytochrome c oxidase is the component of the respiratory chain that catalyzes the reduction of oxygen to water. Electrons originating from reduced cytochrome c in the intermembrane space (IMS) are transferred via the dinuclear copper A center (CU(A)) of subunit 2 and heme A of subunit 1 to the active site in subunit 1, a binuclear center (BNC) formed by heme A3 and copper B (CU(B)). The BNC reduces molecular oxygen to 2 water molecules unsing 4 electrons from cytochrome c in the IMS and 4 protons from the mitochondrial matrix. This is Cytochrome c oxidase subunit 6A1, mitochondrial (COX6A1) from Ovis aries (Sheep).